Consider the following 153-residue polypeptide: Pheromone-binding protein Gp-9 (153 aa).

Residues 1–19 form the signal peptide; sequence MKTFVLHIFIFALVAFASA. Intrachain disulfides connect C37-C77, C73-C129, and C118-C138.

The protein belongs to the PBP/GOBP family. In terms of assembly, homodimer.

The protein resides in the secreted. In terms of biological role, colony queen number, a major feature of social organization, is associated with worker genotype for Gp-9. Colonies are headed by either a single reproductive queen (monogyne form) or multiple queens (polygyne form). Differences in worker Gp-9 genotypes between social forms may cause differences in workers' abilities to recognize queens and regulate their numbers. This Solenopsis richteri (Black imported fire ant) protein is Pheromone-binding protein Gp-9.